The primary structure comprises 309 residues: Small ribosomal subunit biogenesis GTPase RsgA (309 aa).

The 160-residue stretch at 88–247 (KNLITRPPVA…IADTPGFNKP (160 aa)) folds into the CP-type G domain. Residues 137–140 (TKRD) and 189–197 (GPSGVGKSS) each bind GTP. Positions 272, 277, 279, and 285 each coordinate Zn(2+).

This sequence belongs to the TRAFAC class YlqF/YawG GTPase family. RsgA subfamily. Monomer. Associates with 30S ribosomal subunit, binds 16S rRNA. Zn(2+) serves as cofactor.

It localises to the cytoplasm. One of several proteins that assist in the late maturation steps of the functional core of the 30S ribosomal subunit. Helps release RbfA from mature subunits. May play a role in the assembly of ribosomal proteins into the subunit. Circularly permuted GTPase that catalyzes slow GTP hydrolysis, GTPase activity is stimulated by the 30S ribosomal subunit. This Prochlorococcus marinus (strain SARG / CCMP1375 / SS120) protein is Small ribosomal subunit biogenesis GTPase RsgA.